The sequence spans 193 residues: Rho-related protein racB (193 aa).

GTP-binding residues include A13, G15, K16, T17, C18, Y32, T35, G60, K116, D118, and A159. T17 lines the Mg(2+) pocket. 2 short sequence motifs (switch) span residues 26 to 37 (NAFPTEYVPTVF) and 57 to 75 (DTAG…YPQT). Residue T35 coordinates Mg(2+). C190 bears the Cysteine methyl ester mark. C190 carries the S-geranylgeranyl cysteine lipid modification. Positions 191–193 (LIF) are cleaved as a propeptide — removed in mature form.

It belongs to the small GTPase superfamily. Rho family. It depends on Mg(2+) as a cofactor.

The protein localises to the cell membrane. It localises to the cytoplasm. It is found in the cytoskeleton. The catalysed reaction is GTP + H2O = GDP + phosphate + H(+). Its activity is regulated as follows. Regulated by guanine nucleotide exchange factors (GEFs) which promote the exchange of bound GDP for free GTP, GTPase activating proteins (GAPs) which increase the GTP hydrolysis activity, and GDP dissociation inhibitors which inhibit the dissociation of the nucleotide from the GTPase. Small GTPase which cycles between active GTP-bound and inactive GDP-bound states. This Entamoeba histolytica (strain ATCC 30459 / HM-1:IMSS / ABRM) protein is Rho-related protein racB.